Consider the following 210-residue polypeptide: MSGLFITLEGPEGAGKSTNREYLAARLREQGVDVVMTREPGGTPLAERIRELLLAPSEEAMAVDTELLLMFAARAQHLAQVIRPALARGAVVLCDRFTDATYAYQGGGRGLSVERIAILESFVQGELRPDLTLVFDLPVEVGLARAAARGRLDRFEQEGQAFFEAVRQAYLQRAGQQPQRYSLLDAAQPLAAVQRAIDALLPGILERCRG.

Glycine 10 to serine 17 lines the ATP pocket.

It belongs to the thymidylate kinase family.

It carries out the reaction dTMP + ATP = dTDP + ADP. Functionally, phosphorylation of dTMP to form dTDP in both de novo and salvage pathways of dTTP synthesis. This chain is Thymidylate kinase, found in Pseudomonas entomophila (strain L48).